Consider the following 123-residue polypeptide: Histone H2B 2 (123 aa).

The tract at residues 1-32 (MAPPKPSAKGAKKAAKTVTKPKDGKKRRHARK) is disordered. O-linked (GlcNAc) serine glycosylation is present at Ser110. Residue Lys118 forms a Glycyl lysine isopeptide (Lys-Gly) (interchain with G-Cter in ubiquitin) linkage.

It belongs to the histone H2B family. The nucleosome is a histone octamer containing two molecules each of H2A, H2B, H3 and H4 assembled in one H3-H4 heterotetramer and two H2A-H2B heterodimers. The octamer wraps approximately 147 bp of DNA. Monoubiquitination of Lys-118 gives a specific tag for epigenetic transcriptional activation and is also prerequisite for histone H3 'Lys-4' and 'Lys-79' methylation. Post-translationally, glcNAcylation at Ser-110 promotes monoubiquitination of Lys-118. It fluctuates in response to extracellular glucose, and associates with transcribed genes.

Its subcellular location is the nucleus. It is found in the chromosome. Core component of nucleosome. Nucleosomes wrap and compact DNA into chromatin, limiting DNA accessibility to the cellular machineries which require DNA as a template. Histones thereby play a central role in transcription regulation, DNA repair, DNA replication and chromosomal stability. DNA accessibility is regulated via a complex set of post-translational modifications of histones, also called histone code, and nucleosome remodeling. The sequence is that of Histone H2B 2 (his-4) from Caenorhabditis elegans.